A 318-amino-acid chain; its full sequence is Elongator complex protein 5 (318 aa).

Serine 270 bears the Phosphoserine mark.

Belongs to the ELP5 family. Component of the elongator complex which consists of ELP1, ELP2, ELP3, ELP4, ELP5 and ELP6; in the complex, is required for optimal binding of ELP3 to ELP4. Post-translationally, tyrosine-phosphorylated.

Its subcellular location is the nucleus. It is found in the cytoplasm. Its pathway is tRNA modification; 5-methoxycarbonylmethyl-2-thiouridine-tRNA biosynthesis. In terms of biological role, component of the elongator complex which is required for multiple tRNA modifications, including mcm5U (5-methoxycarbonylmethyl uridine), mcm5s2U (5-methoxycarbonylmethyl-2-thiouridine), and ncm5U (5-carbamoylmethyl uridine). The elongator complex catalyzes the formation of carboxymethyluridine in the wobble base at position 34 in tRNAs. Involved in cell migration. The protein is Elongator complex protein 5 (Elp5) of Rattus norvegicus (Rat).